We begin with the raw amino-acid sequence, 114 residues long: Superoxide dismutase [Cu-Zn] (114 aa).

Cu cation is bound by residues H37, H39, and H54. A disordered region spans residues 48–76 (CMSSGPHFNPRSKEHGAPTDENRHLGDLG). Zn(2+) is bound by residues H54, H62, H71, and D74. Residues 58-73 (RSKEHGAPTDENRHLG) show a composition bias toward basic and acidic residues. Residue H111 participates in Cu cation binding.

This sequence belongs to the Cu-Zn superoxide dismutase family. Homodimer. Cu cation serves as cofactor. Requires Zn(2+) as cofactor.

It is found in the cytoplasm. It carries out the reaction 2 superoxide + 2 H(+) = H2O2 + O2. Functionally, destroys radicals which are normally produced within the cells and which are toxic to biological systems. This Drosophila obscura (Fruit fly) protein is Superoxide dismutase [Cu-Zn].